Consider the following 251-residue polypeptide: Hydroxyacylglutathione hydrolase (251 aa).

Residues H53, H55, D57, H58, H110, D127, and H165 each coordinate Zn(2+).

It belongs to the metallo-beta-lactamase superfamily. Glyoxalase II family. In terms of assembly, monomer. The cofactor is Zn(2+).

It catalyses the reaction an S-(2-hydroxyacyl)glutathione + H2O = a 2-hydroxy carboxylate + glutathione + H(+). Its pathway is secondary metabolite metabolism; methylglyoxal degradation; (R)-lactate from methylglyoxal: step 2/2. Its function is as follows. Thiolesterase that catalyzes the hydrolysis of S-D-lactoyl-glutathione to form glutathione and D-lactic acid. In Escherichia coli (strain ATCC 8739 / DSM 1576 / NBRC 3972 / NCIMB 8545 / WDCM 00012 / Crooks), this protein is Hydroxyacylglutathione hydrolase.